We begin with the raw amino-acid sequence, 172 residues long: Transcriptional regulator TAC1 (172 aa).

A disordered region spans residues 1-28 (MENIKNPKNADDCSDSISKNSHQGVDDS). The span at 15-28 (DSISKNSHQGVDDS) shows a compositional bias: polar residues. The segment at 35 to 57 (YVCSFCIRGFSNAQALGGHMNIH) adopts a C2H2-type zinc-finger fold. The EAR-like (transcriptional repression) signature appears at 156–160 (LDLEL).

In terms of tissue distribution, preferentially expressed in roots and flowers. Slightly expressed in leaves and stems.

Its subcellular location is the nucleus. In terms of biological role, activation factor which mediates telomerase activity and potentiates responses to auxin through the regulation of BT2. Binds in vitro to the DNA sequence 5'-GACAGTGTTAC-3' of the BT2 promoter. This chain is Transcriptional regulator TAC1 (TAC1), found in Arabidopsis thaliana (Mouse-ear cress).